A 61-amino-acid chain; its full sequence is Large ribosomal subunit protein uL30 (61 aa).

The protein belongs to the universal ribosomal protein uL30 family. Part of the 50S ribosomal subunit.

The chain is Large ribosomal subunit protein uL30 from Marinomonas sp. (strain MWYL1).